A 1323-amino-acid polypeptide reads, in one-letter code: Alpha-factor-transporting ATPase (1323 aa).

Over residues 1-10 the composition is skewed to basic and acidic residues; the sequence is MFQEKSEKSS. A disordered region spans residues 1–23; that stretch reads MFQEKSEKSSFPKRSSSLRSPSD. Residues 12–23 are compositionally biased toward low complexity; it reads PKRSSSLRSPSD. N37 carries N-linked (GlcNAc...) asparagine glycosylation. The chain crosses the membrane as a helical span at residues 42–62; it reads WPLILVGILLMGGSAIATLMN. Residues 45-337 form the ABC transmembrane type-1 1 domain; that stretch reads ILVGILLMGG…ITELLAILNT (293 aa). A glycan (N-linked (GlcNAc...) asparagine) is linked at N83. A helical transmembrane segment spans residues 93–113; sequence LCVGLIGIGCCKMILVWLGMF. N-linked (GlcNAc...) asparagine glycosylation is present at N136. Transmembrane regions (helical) follow at residues 169 to 189, 192 to 212, 281 to 301, and 315 to 335; these read ILAS…MSFY, WSTT…GWYF, VLKT…NYLL, and FSSC…LAIL. Residues 373-609 form the ABC transporter 1 domain; the sequence is IYFKNVWFES…EIVQNYKSQG (237 aa). Position 408–415 (408–415) interacts with ATP; the sequence is GKSGSGKS. Residue N450 is glycosylated (N-linked (GlcNAc...) asparagine). Residues 677-697 form a helical membrane-spanning segment; that stretch reads LLGFGILLAIFQGVSSPVFSY. Positions 678 to 969 constitute an ABC transmembrane type-1 2 domain; sequence LGFGILLAIF…LIHQLPEITR (292 aa). N-linked (GlcNAc...) asparagine glycosylation is present at N714. The helical transmembrane segment at 724–744 threads the bilayer; sequence CISLSIAIFTGVTSYLSEFIL. 2 N-linked (GlcNAc...) asparagine glycosylation sites follow: N777 and N789. 3 helical membrane-spanning segments follow: residues 801–821, 828–848, and 909–929; these read FFPL…WSIV, LVGI…GKIL, and IGFA…LFYG. Residue N939 is glycosylated (N-linked (GlcNAc...) asparagine). Residues 941–961 traverse the membrane as a helical segment; that stretch reads SQLLQVITLLSFTISNASILI. Residues N991, N1030, and N1039 are each glycosylated (N-linked (GlcNAc...) asparagine). The 287-residue stretch at 1035–1321 folds into the ABC transporter 2 domain; it reads ISFNNVSFSY…DGEFTKITKT (287 aa). 1071 to 1078 provides a ligand contact to ATP; it reads GQSGSGKS. Residue N1097 is glycosylated (N-linked (GlcNAc...) asparagine). Residues 1120 to 1140 traverse the membrane as a helical segment; sequence GLLCQTIAIVPQFPKFFSGTI. N1143, N1149, and N1157 each carry an N-linked (GlcNAc...) asparagine glycan. The helical transmembrane segment at 1170–1190 threads the bilayer; it reads ILKLVNLHQFIVSLPQGLLTI. The N-linked (GlcNAc...) asparagine glycan is linked to N1192. Acidic residues predominate over residues 1194-1208; it reads SDNDNDNGNENENEN. A disordered region spans residues 1194–1217; sequence SDNDNDNGNENENENENGNTISTS.

The protein belongs to the ABC transporter superfamily. Alpha-factor sex pheromone exporter (TC 3.A.1.206) family.

The protein resides in the membrane. It carries out the reaction an [alpha-factor](in) + ATP + H2O = an [alpha-factor](out) + ADP + phosphate + H(+). In Candida albicans (strain WO-1) (Yeast), this protein is Alpha-factor-transporting ATPase (HST6).